Reading from the N-terminus, the 254-residue chain is Phosphate import ATP-binding protein PstB (254 aa).

The 243-residue stretch at 7-249 (MVAESMSFYY…PREKQTEDYI (243 aa)) folds into the ABC transporter domain. 39-46 (GPSGCGKS) contributes to the ATP binding site.

It belongs to the ABC transporter superfamily. Phosphate importer (TC 3.A.1.7) family. The complex is composed of two ATP-binding proteins (PstB), two transmembrane proteins (PstC and PstA) and a solute-binding protein (PstS).

Its subcellular location is the cell inner membrane. The enzyme catalyses phosphate(out) + ATP + H2O = ADP + 2 phosphate(in) + H(+). Functionally, part of the ABC transporter complex PstSACB involved in phosphate import. Responsible for energy coupling to the transport system. In Chlorobium chlorochromatii (strain CaD3), this protein is Phosphate import ATP-binding protein PstB.